A 712-amino-acid polypeptide reads, in one-letter code: Zinc finger and BTB domain-containing protein 39 (712 aa).

One can recognise a BTB domain in the interval 30–96 (CDVTIVVGSR…VYTSELFTDL (67 aa)). Disordered regions lie at residues 129–162 (ARAK…LRGG), 176–224 (SDAG…IPSM), and 236–260 (GIQT…KNSF). Polar residues predominate over residues 134–147 (LTSTSESHSGTLSC). Residue K183 forms a Glycyl lysine isopeptide (Lys-Gly) (interchain with G-Cter in SUMO2) linkage. The C2H2-type 1 zinc finger occupies 372–394 (GNCKVCETHFQDRNSRVTHVLSH). The C2H2-type 2; atypical zinc finger occupies 400–422 (FSCDMCETKFFTQWQLTLHRRDG). A Glycyl lysine isopeptide (Lys-Gly) (interchain with G-Cter in SUMO2) cross-link involves residue K439. The C2H2-type 3; atypical zinc finger occupies 480–502 (QACSVCDQRHLNLCSLMWHTLSH). 4 consecutive C2H2-type zinc fingers follow at residues 508-530 (FSCS…MAVH), 538-560 (FHCR…VSQH), 605-627 (YSCK…RRIH), and 633-655 (YQCK…LKTH). The segment at 661–683 (YRCTVCGHYSSTLNLMSKHVGVH) adopts a C2H2-type 8; atypical zinc-finger fold.

It belongs to the krueppel C2H2-type zinc-finger protein family.

Its subcellular location is the nucleus. May be involved in transcriptional regulation. This chain is Zinc finger and BTB domain-containing protein 39 (ZBTB39), found in Homo sapiens (Human).